The chain runs to 149 residues: Transcriptional repressor NrdR (149 aa).

The segment at 3-34 is a zinc-finger region; that stretch reads CPFCSTEETKVIDSRLVSDGYQVRRRRECTKC. An ATP-cone domain is found at 49-139; sequence PKIIKNNGMR…VYLSFENINE (91 aa).

Belongs to the NrdR family. Zn(2+) is required as a cofactor.

In terms of biological role, negatively regulates transcription of bacterial ribonucleotide reductase nrd genes and operons by binding to NrdR-boxes. The protein is Transcriptional repressor NrdR of Mannheimia succiniciproducens (strain KCTC 0769BP / MBEL55E).